The sequence spans 183 residues: MALSAALRLQSLRSLAPHCKLFASALQSHTQQPCRSHRLAPTDDELYQRTTVTRLERDSAEFMFIETYSSQGFIINGDKVVGPCAVIPKAILQWNVGSYKDINLESLSLFHMLSPRIEILVVGTGDRVERLDPNILKFMRQKGVAVEVQDTANACATFNFLVSERRITAAALIPPQLVPKDPL.

This sequence belongs to the NDUFAF3 family.

It localises to the nucleus. Its subcellular location is the mitochondrion inner membrane. In terms of biological role, essential factor for the assembly of mitochondrial NADH:ubiquinone oxidoreductase complex (complex I). The polypeptide is NADH dehydrogenase [ubiquinone] 1 alpha subcomplex assembly factor 3 (ndufaf3) (Xenopus tropicalis (Western clawed frog)).